The following is a 712-amino-acid chain: DNA ligase (712 aa).

The segment at 1–22 is disordered; sequence MVQKNEHQGGQSQHSLFAAGPT. NAD(+) is bound by residues 53-57 and aspartate 138; that span reads DDQFD. Lysine 140 acts as the N6-AMP-lysine intermediate in catalysis. 4 residues coordinate NAD(+): arginine 161, glutamate 199, lysine 318, and lysine 342. The Zn(2+) site is built by cysteine 436, cysteine 439, cysteine 454, and cysteine 459. The tract at residues 612 to 631 is disordered; sequence RGGRSGGGSSGSTGEGGLAS. A compositionally biased stretch (gly residues) spans 614 to 630; that stretch reads GRSGGGSSGSTGEGGLA. Residues 629–712 enclose the BRCT domain; sequence LASGPLAGKN…MLREAKAASE (84 aa).

It belongs to the NAD-dependent DNA ligase family. LigA subfamily. The cofactor is Mg(2+). Mn(2+) is required as a cofactor.

It carries out the reaction NAD(+) + (deoxyribonucleotide)n-3'-hydroxyl + 5'-phospho-(deoxyribonucleotide)m = (deoxyribonucleotide)n+m + AMP + beta-nicotinamide D-nucleotide.. Functionally, DNA ligase that catalyzes the formation of phosphodiester linkages between 5'-phosphoryl and 3'-hydroxyl groups in double-stranded DNA using NAD as a coenzyme and as the energy source for the reaction. It is essential for DNA replication and repair of damaged DNA. In Desulfovibrio desulfuricans (strain ATCC 27774 / DSM 6949 / MB), this protein is DNA ligase.